Here is a 215-residue protein sequence, read N- to C-terminus: Cytochrome c biogenesis ATP-binding export protein CcmA (215 aa).

Positions 7-209 (LKIDRLACQR…ALTVLNLAQY (203 aa)) constitute an ABC transporter domain. 39–46 (GHNGIGKT) contacts ATP.

It belongs to the ABC transporter superfamily. CcmA exporter (TC 3.A.1.107) family. In terms of assembly, the complex is composed of two ATP-binding proteins (CcmA) and two transmembrane proteins (CcmB).

The protein localises to the cell inner membrane. It carries out the reaction heme b(in) + ATP + H2O = heme b(out) + ADP + phosphate + H(+). Part of the ABC transporter complex CcmAB involved in the biogenesis of c-type cytochromes; once thought to export heme, this seems not to be the case, but its exact role is uncertain. Responsible for energy coupling to the transport system. The protein is Cytochrome c biogenesis ATP-binding export protein CcmA of Mannheimia succiniciproducens (strain KCTC 0769BP / MBEL55E).